The primary structure comprises 94 residues: Probable Fe(2+)-trafficking protein (94 aa).

Belongs to the Fe(2+)-trafficking protein family.

In terms of biological role, could be a mediator in iron transactions between iron acquisition and iron-requiring processes, such as synthesis and/or repair of Fe-S clusters in biosynthetic enzymes. This is Probable Fe(2+)-trafficking protein from Marinomonas sp. (strain MWYL1).